Here is a 352-residue protein sequence, read N- to C-terminus: Gap junction alpha-4 protein (352 aa).

At glycine 2–lysine 23 the chain is on the cytoplasmic side. Residues isoleucine 24 to glycine 46 form a helical membrane-spanning segment. The Extracellular portion of the chain corresponds to aspartate 47–arginine 76. Residues tyrosine 77–leucine 99 form a helical membrane-spanning segment. The Cytoplasmic segment spans residues serine 100–threonine 153. Residues tyrosine 154–tyrosine 176 form a helical membrane-spanning segment. Residues glycine 177–phenylalanine 208 are Extracellular-facing. The chain crosses the membrane as a helical span at residues isoleucine 209–valine 231. At cysteine 232–valine 352 the chain is on the cytoplasmic side. The interval lysine 330–valine 352 is disordered. Residues threonine 340–valine 352 are compositionally biased toward polar residues.

This sequence belongs to the connexin family. Alpha-type (group II) subfamily. In terms of assembly, a connexon is composed of a hexamer of connexins.

Its subcellular location is the cell membrane. The protein resides in the cell junction. It localises to the gap junction. Its function is as follows. One gap junction consists of a cluster of closely packed pairs of transmembrane channels, the connexons, through which materials of low MW diffuse from one cell to a neighboring cell. This chain is Gap junction alpha-4 protein (gja4), found in Xenopus tropicalis (Western clawed frog).